The sequence spans 164 residues: Peptide deformylase-like (164 aa).

Glu-134 is an active-site residue.

This sequence belongs to the polypeptide deformylase family.

This is Peptide deformylase-like from Brucella melitensis biotype 1 (strain ATCC 23456 / CCUG 17765 / NCTC 10094 / 16M).